The sequence spans 865 residues: Leucine--tRNA ligase (865 aa).

The 'HIGH' region motif lies at 36–46 (PYPSGKIHMGH). Residues 608–612 (KMSKS) carry the 'KMSKS' region motif. Lys-611 contributes to the ATP binding site.

The protein belongs to the class-I aminoacyl-tRNA synthetase family.

It localises to the cytoplasm. It carries out the reaction tRNA(Leu) + L-leucine + ATP = L-leucyl-tRNA(Leu) + AMP + diphosphate. The polypeptide is Leucine--tRNA ligase (Wolbachia sp. subsp. Brugia malayi (strain TRS)).